The primary structure comprises 342 residues: MEPVCVKDFTLPELEEWVQGIGERSFRARQLFRHVYGRGVRSWSECSDLSRMFRVQLEHGVELDALSVLKKEQADDGTSKYLFGLRDGHSIEAVLIPDLPRSTLCVSSQVGCALGCKFCLTGSLGFKRNLSAAEIVDQVCQVQRDLGSRSRITNIVFMGMGEPLANLDSVLRAIRVIAEPNGMAFSHRRITLSTAGLVPQLRRLGRESPVNLAVSLHAAENELRAELMPVNRTYPLEVLMAACREYPLPPRKRITFEYILLDGINDDPKQAKQLVKLLHGIRAKVNLMPFNPHPGSVFRKPSEQRVLAFQEALQNARITTHVRRSRGGEIGAACGQLVAEYG.

Glu92 (proton acceptor) is an active-site residue. The Radical SAM core domain occupies 98-329 (DLPRSTLCVS…THVRRSRGGE (232 aa)). A disulfide bridge links Cys105 with Cys334. [4Fe-4S] cluster contacts are provided by Cys112, Cys116, and Cys119. S-adenosyl-L-methionine-binding positions include 161 to 162 (GE), Ser193, 215 to 217 (SLH), and Asn291. Cys334 (S-methylcysteine intermediate) is an active-site residue.

Belongs to the radical SAM superfamily. RlmN family. [4Fe-4S] cluster is required as a cofactor.

Its subcellular location is the cytoplasm. It carries out the reaction adenosine(2503) in 23S rRNA + 2 reduced [2Fe-2S]-[ferredoxin] + 2 S-adenosyl-L-methionine = 2-methyladenosine(2503) in 23S rRNA + 5'-deoxyadenosine + L-methionine + 2 oxidized [2Fe-2S]-[ferredoxin] + S-adenosyl-L-homocysteine. The enzyme catalyses adenosine(37) in tRNA + 2 reduced [2Fe-2S]-[ferredoxin] + 2 S-adenosyl-L-methionine = 2-methyladenosine(37) in tRNA + 5'-deoxyadenosine + L-methionine + 2 oxidized [2Fe-2S]-[ferredoxin] + S-adenosyl-L-homocysteine. In terms of biological role, specifically methylates position 2 of adenine 2503 in 23S rRNA and position 2 of adenine 37 in tRNAs. m2A2503 modification seems to play a crucial role in the proofreading step occurring at the peptidyl transferase center and thus would serve to optimize ribosomal fidelity. In Syntrophobacter fumaroxidans (strain DSM 10017 / MPOB), this protein is Dual-specificity RNA methyltransferase RlmN.